Reading from the N-terminus, the 578-residue chain is Glutathione hydrolase 2 (578 aa).

Residues 1–26 (MNSFMSLVRTATIALLLIAFLQNANA) form the signal peptide. Asn-94 is a glycosylation site (N-linked (GlcNAc...) asparagine). L-glutamate is bound at residue Arg-103. Residues Asn-176 and Asn-227 are each glycosylated (N-linked (GlcNAc...) asparagine). The active-site Nucleophile is Thr-374. L-glutamate is bound by residues Thr-392, Asn-394, Glu-413, Asp-416, 446-447 (SS), and 467-468 (GG). N-linked (GlcNAc...) asparagine glycosylation is present at Asn-511.

The protein belongs to the gamma-glutamyltransferase family. As to expression, expressed in roots, immature trichomes and pollen. In developing siliques, specifically expressed in the embryo, endosperm, outer integument and a small portion of the funiculus.

The protein resides in the secreted. The protein localises to the extracellular space. Its subcellular location is the apoplast. It catalyses the reaction an N-terminal (5-L-glutamyl)-[peptide] + an alpha-amino acid = 5-L-glutamyl amino acid + an N-terminal L-alpha-aminoacyl-[peptide]. The enzyme catalyses glutathione + H2O = L-cysteinylglycine + L-glutamate. The catalysed reaction is an S-substituted glutathione + H2O = an S-substituted L-cysteinylglycine + L-glutamate. The protein operates within sulfur metabolism; glutathione metabolism. May be required for glutathione transport into developing seeds. This is Glutathione hydrolase 2 (GGT2) from Arabidopsis thaliana (Mouse-ear cress).